Consider the following 43-residue polypeptide: Peroxidase (43 aa).

This sequence belongs to the peroxidase family. Classical plant (class III) peroxidase subfamily. It depends on Ca(2+) as a cofactor. Requires heme b as cofactor.

It carries out the reaction 2 a phenolic donor + H2O2 = 2 a phenolic radical donor + 2 H2O. In terms of biological role, removal of H(2)O(2), oxidation of toxic reductants, biosynthesis and degradation of lignin, suberization, auxin catabolism, response to environmental stresses such as wounding, pathogen attack and oxidative stress. These functions might be dependent on each isozyme/isoform in each plant tissue. The protein is Peroxidase of Cynara cardunculus var. scolymus (Globe artichoke).